The sequence spans 368 residues: Trans-enoyl reductase thnE (368 aa).

Residue 53–56 participates in NADP(+) binding; that stretch reads VDVK. 140–147 lines the substrate pocket; it reads LATATAAY. NADP(+) is bound by residues 179–182, 202–205, Y220, and 267–268; these read STAT, SPSN, and VE. Residue 289-293 coordinates substrate; sequence VMTVW. NADP(+) is bound at residue 358–359; that stretch reads PS.

It belongs to the zinc-containing alcohol dehydrogenase family. Monomer.

It catalyses the reaction malate + 6 malonyl-CoA + acetyl-CoA + 2 AH2 + 2 S-adenosyl-L-methionine + 5 NADPH + 9 H(+) = trihazone A + 2 A + 2 S-adenosyl-L-homocysteine + 6 CO2 + 5 NADP(+) + 7 CoA + 6 H2O. It functions in the pathway secondary metabolite biosynthesis. Its function is as follows. Trans-enoyl reductase; part of the gene cluster that produces the tetronate natural products trihazones. The PKS-NRPS synthetase thnA with the help of the trans-enoyl reductase thnE are responsible for the synthesis of the carboxylmethyl containing trihazone A. The PKS portion of thnA synthesizes beta-keto-triene chain from one acetyl-CoA and 6 equivalents of malonyl-CoA, in collaboration with thnE, which selectively reduces the enoyl intermediate during the first and fourth iteration of the PKS. The NRPS domain selects and activates malate, of which the alpha-hydroxyl group attacks the completed polyketide acyl-S-ACP chain to form the ester product. Intramolecular Dieckmann cyclization catalyzed by the terminal reductase domain releases the product as trihazone A from the PKS-NPRS. The pathway begins with the formation of trihazone A by the hybrid PKS-NRPS synthetase thnA and the trans-enoyl reductase thnE. Trihazone A is further decarboxylated by the 2-oxoglutarate-dependent dioxygenase thnC to produce trihazone D. The function of the FAD-dependent monooxygenase thnD has still to be identified. The sequence is that of Trans-enoyl reductase thnE from Trichoderma harzianum (Hypocrea lixii).